Here is a 1163-residue protein sequence, read N- to C-terminus: Leptin receptor (1163 aa).

Positions methionine 1 to alanine 21 are cleaved as a signal peptide. Residues phenylalanine 22–aspartate 837 lie on the Extracellular side of the membrane. 7 N-linked (GlcNAc...) asparagine glycosylation sites follow: asparagine 23, asparagine 41, asparagine 56, asparagine 71, asparagine 79, asparagine 96, and asparagine 114. 2 disulfide bridges follow: cysteine 37/cysteine 88 and cysteine 87/cysteine 97. Cystine bridges form between cysteine 129–cysteine 140 and cysteine 184–cysteine 194. N-linked (GlcNAc...) asparagine glycosylation is found at asparagine 185, asparagine 204, asparagine 274, asparagine 345, and asparagine 395. The region spanning proline 237–valine 331 is the Fibronectin type-III 1 domain. Cystine bridges form between cysteine 350-cysteine 410 and cysteine 411-cysteine 416. Asparagine 431 is a glycosylation site (N-linked (GlcNAc...) asparagine). Intrachain disulfides connect cysteine 434/cysteine 445, cysteine 471/cysteine 526, and cysteine 486/cysteine 496. A leptin-binding region spans residues arginine 465–lysine 482. Fibronectin type-III domains follow at residues proline 537–methionine 632, proline 637–serine 730, and isoleucine 738–threonine 831. The short motif at tryptophan 620 to serine 624 is the WSXWS motif element. N-linked (GlcNAc...) asparagine glycans are attached at residues asparagine 622, asparagine 657, asparagine 668, asparagine 686, asparagine 695, asparagine 726, and asparagine 748. The chain crosses the membrane as a helical span at residues alanine 838–isoleucine 860. The Cytoplasmic segment spans residues leucine 861–valine 1163. The Box 1 motif motif lies at phenylalanine 869–lysine 877. Serine 880 bears the Phosphoserine mark. The segment at glutamate 891–leucine 896 is required for JAK2 activation. The interval leucine 896 to valine 904 is required for STAT3 phosphorylation. Tyrosine 984 carries the phosphotyrosine; by JAK2 modification. A Phosphotyrosine modification is found at tyrosine 1077. Tyrosine 1139 bears the Phosphotyrosine; by JAK2 mark.

Belongs to the type I cytokine receptor family. Type 2 subfamily. Present as a mixture of monomers and dimers. The phosphorylated receptor binds a number of SH2 domain-containing proteins such as JAK2, STAT3, PTPN11, and SOCS3. Interaction with SOCS3 inhibits JAK/STAT signaling and MAPK cascade. In terms of processing, on ligand binding, phosphorylated on two conserved C-terminal tyrosine residues (isoform B only) by JAK2. Tyr-984 is required for complete binding and activation of PTPN11, ERK/FOS activation and, for interaction with SOCS3. Phosphorylation on Tyr-1139 is required for STAT3 binding/activation. On ligand binding, phosphorylated on two conserved C-terminal tyrosine residues (isoform B only) by JAK2. Tyr-984 is required for complete binding and activation of PTPN11, ERK/FOS activation,for interaction with SOCS3 and SOCS3 mediated inhibition of leptin signaling. Phosphorylation on Tyr-1139 is required for STAT3 binding/activation. Phosphorylation of Tyr-1077 has a more accessory role. Widely expressed. High expression of isoform B in liver, adipose tissue, hypothalamus and choroid plexus.

The protein localises to the cell membrane. It localises to the basolateral cell membrane. Receptor for hormone LEP/leptin. On ligand binding, mediates LEP central and peripheral effects through the activation of different signaling pathways such as JAK2/STAT3 and MAPK cascade/FOS. In the hypothalamus, LEP acts as an appetite-regulating factor that induces a decrease in food intake and an increase in energy consumption by inducing anorexinogenic factors and suppressing orexigenic neuropeptides, also regulates bone mass and secretion of hypothalamo-pituitary-adrenal hormones. In the periphery, increases basal metabolism, influences reproductive function, regulates pancreatic beta-cell function and insulin secretion, is pro-angiogenic and affects innate and adaptive immunity. Control of energy homeostasis and melanocortin production (stimulation of POMC and full repression of AgRP transcription) is mediated by STAT3 signaling, whereas distinct signals regulate NPY and the control of fertility, growth and glucose homeostasis. Involved in the regulation of counter-regulatory response to hypoglycemia by inhibiting neurons of the parabrachial nucleus. Has a specific effect on T lymphocyte responses, differentially regulating the proliferation of naive and memory T-cells. Leptin increases Th1 and suppresses Th2 cytokine production. Functionally, may transport LEP across the blood-brain barrier. Binds LEP and mediates LEP endocytosis. Does not induce phosphorylation of and activate STAT3. The protein is Leptin receptor (LEPR) of Macaca mulatta (Rhesus macaque).